Reading from the N-terminus, the 910-residue chain is Anoctamin-6 (910 aa).

The Cytoplasmic portion of the chain corresponds to 1–300 (MKKMSRNVLL…YGEKIGIYFA (300 aa)). Residues 301 to 321 (WLGYYTQMLLLAAVVGVACFL) form a helical membrane-spanning segment. Residues 322–375 (YGYLNQDNCTWSKEVCHPDIGGKIIMCPQCDRLCPFWKLNITCESSKKLCIFDS) are Extracellular-facing. The N-linked (GlcNAc...) asparagine glycan is linked to Asn-329. Intrachain disulfides connect Cys-330-Cys-371, Cys-337-Cys-364, Cys-348-Cys-806, Cys-351-Cys-355, and Cys-595-Cys-600. Asn-361 is a glycosylation site (N-linked (GlcNAc...) asparagine). Residues 376 to 396 (FGTLVFAVFMGVWVTLFLEFW) traverse the membrane as a helical segment. At 397–455 (KRRQAELEYEWDTVELQQEEQARPEYEARCTHVVINEITQEEERIPFTAWGKCIRITLC) the chain is on the cytoplasmic side. A helical membrane pass occupies residues 456–476 (ASAVFFWILLIIASVIGIIVY). Residues 477-509 (RLSVFIVFSAKLPKNINGTDPIQKYLTPQTATS) are Extracellular-facing. An N-linked (GlcNAc...) asparagine glycan is attached at Asn-493. A helical membrane pass occupies residues 510-530 (ITASIISFIIIMILNTIYEKV). The Cytoplasmic segment spans residues 531–551 (AIMITNFELPRTQTDYENSLT). A helical transmembrane segment spans residues 552 to 572 (MKMFLFQFVNYYSSCFYIAFF). The Extracellular portion of the chain corresponds to 573 to 601 (KGKFVGYPGDPVYWLGKYRNEECDPGGCL). Residues 602 to 621 (LELTTQLTIIMGGKAIWNNI) traverse the membrane as a helical segment. Over 622 to 663 (QEVLLPWIMNLIGRFHRVSGSEKITPRWEQDYHLQPMGKLGL) the chain is Cytoplasmic. Ca(2+) contacts are provided by Glu-623, Glu-666, and Glu-669. The next 2 helical transmembrane spans lie at 664 to 684 (FYEYLEMIIQFGFVTLFVASF) and 685 to 705 (PLAPLLALVNNILEIRVDAWK). The Cytoplasmic segment spans residues 706-722 (LTTQFRRLVPEKAQDIG). Residues 723 to 743 (AWQPIMQGIAILAVVTNAMII) traverse the membrane as a helical segment. Over 744 to 836 (AFTSDMIPRL…YWHVIAAKLA (93 aa)) the chain is Extracellular. N-linked (GlcNAc...) asparagine glycans are attached at residues Asn-777, Asn-790, and Asn-802. A helical transmembrane segment spans residues 837–857 (FIIVMEHVIYSVKFFISYAIP). Residues 858–910 (DVSKRTKSKIQREKYLTQKLLHENHLKDMTKNMGVIAERMIEAVDNNLRPKSE) are Cytoplasmic-facing.

Belongs to the anoctamin family. Homodimer. In terms of tissue distribution, expressed in embryonic stem cell, fetal liver, retina, chronic myologenous leukemia and intestinal cancer.

It localises to the cell membrane. The catalysed reaction is a 1,2-diacyl-sn-glycero-3-phospho-L-serine(in) = a 1,2-diacyl-sn-glycero-3-phospho-L-serine(out). It catalyses the reaction a beta-D-galactosyl-(1&lt;-&gt;1')-N-acylsphing-4-enine(out) = a beta-D-galactosyl-(1&lt;-&gt;1')-N-acylsphing-4-enine(in). It carries out the reaction a 1,2-diacyl-sn-glycero-3-phosphocholine(in) = a 1,2-diacyl-sn-glycero-3-phosphocholine(out). With respect to regulation, exhibits synergistic gating by Ca(2+) and voltage. Inhibited by some non-specific cation channel blockers such as: ruthenium red, 2-aminoethyl diphenylborinate (2APB), gadolinium and cadmium ions. (Microbial infection) Activated by SARS coronavirus-2/SARS-CoV-2 spike protein. In terms of biological role, small-conductance calcium-activated nonselective cation (SCAN) channel which acts as a regulator of phospholipid scrambling in platelets and osteoblasts. Phospholipid scrambling results in surface exposure of phosphatidylserine which in platelets is essential to trigger the clotting system whereas in osteoblasts is essential for the deposition of hydroxyapatite during bone mineralization. Has calcium-dependent phospholipid scramblase activity; scrambles phosphatidylserine, phosphatidylcholine and galactosylceramide. Can generate outwardly rectifying chloride channel currents in airway epithelial cells and Jurkat T lymphocytes. (Microbial infection) Upon SARS coronavirus-2/SARS-CoV-2 infection, is activated by spike protein which increases the amplitude of spontaneous Ca(2+) signals and is required for spike-mediated syncytia. In Homo sapiens (Human), this protein is Anoctamin-6.